We begin with the raw amino-acid sequence, 1025 residues long: Multidrug resistance protein MdtC (1025 aa).

A run of 12 helical transmembrane segments spans residues 3-23 (FFAL…AITL), 333-353 (EVEQ…FLFL), 360-380 (IIPA…MYLC), 387-407 (LSLM…IVVL), 431-451 (VGFT…PLLL), 463-483 (FAVT…TLTP), 528-548 (LVGA…ISIP), 853-873 (VILI…LYES), 875-895 (VHPL…LLAL), 897-917 (LFNA…IGIV), 953-973 (PIMM…LSGG), and 984-1004 (ITIV…TPVV).

This sequence belongs to the resistance-nodulation-cell division (RND) (TC 2.A.6) family. MdtC subfamily. In terms of assembly, part of a tripartite efflux system composed of MdtA, MdtB and MdtC. MdtC forms a heteromultimer with MdtB.

The protein resides in the cell inner membrane. In terms of biological role, the MdtABC tripartite complex confers resistance against novobiocin and deoxycholate. This Escherichia coli O81 (strain ED1a) protein is Multidrug resistance protein MdtC.